The following is a 116-amino-acid chain: Large ribosomal subunit protein uL18 (116 aa).

The protein belongs to the universal ribosomal protein uL18 family. As to quaternary structure, part of the 50S ribosomal subunit; part of the 5S rRNA/L5/L18/L25 subcomplex. Contacts the 5S and 23S rRNAs.

Functionally, this is one of the proteins that bind and probably mediate the attachment of the 5S RNA into the large ribosomal subunit, where it forms part of the central protuberance. The protein is Large ribosomal subunit protein uL18 of Pseudoalteromonas translucida (strain TAC 125).